A 274-amino-acid polypeptide reads, in one-letter code: Large ribosomal subunit protein uL2cz/uL2cy (274 aa).

The disordered stretch occupies residues 224 to 274 (NPVDHPHGGGEGRAPIGRKKPATPWGYPALGRRSRKRNKYSDNLILRRRSK).

This sequence belongs to the universal ribosomal protein uL2 family. Part of the 50S ribosomal subunit.

The protein localises to the plastid. It localises to the chloroplast. In Morus indica (Mulberry), this protein is Large ribosomal subunit protein uL2cz/uL2cy (rpl2-A).